The primary structure comprises 177 residues: NAD(P)H-quinone oxidoreductase subunit 6, chloroplastic (177 aa).

The next 5 membrane-spanning stretches (helical) occupy residues 10-30, 32-52, 61-81, 92-112, and 152-172; these read ILLVSLGSGLIVGGLGVVLLT, PIYSAFSSGLVLVCISLFYIP, AQLLIYVGAINVLILFAVMFM, FWTIGDGFTSVVCTSIFFSLI, and FYLPFELISIILLVSLVGAIA.

It belongs to the complex I subunit 6 family. NDH is composed of at least 16 different subunits, 5 of which are encoded in the nucleus.

Its subcellular location is the plastid. It localises to the chloroplast thylakoid membrane. It carries out the reaction a plastoquinone + NADH + (n+1) H(+)(in) = a plastoquinol + NAD(+) + n H(+)(out). The catalysed reaction is a plastoquinone + NADPH + (n+1) H(+)(in) = a plastoquinol + NADP(+) + n H(+)(out). Its function is as follows. NDH shuttles electrons from NAD(P)H:plastoquinone, via FMN and iron-sulfur (Fe-S) centers, to quinones in the photosynthetic chain and possibly in a chloroplast respiratory chain. The immediate electron acceptor for the enzyme in this species is believed to be plastoquinone. Couples the redox reaction to proton translocation, and thus conserves the redox energy in a proton gradient. This chain is NAD(P)H-quinone oxidoreductase subunit 6, chloroplastic (ndhG), found in Nuphar advena (Common spatterdock).